A 273-amino-acid chain; its full sequence is Cell wall mannoprotein 1 (273 aa).

The N-terminal stretch at 1-17 is a signal peptide; that stretch reads MRFSAIFTLGLAGTALA. The interval 173 to 247 is disordered; it reads DVSDSAPSSS…GSASATSPPL (75 aa). The segment covering 177–247 has biased composition (low complexity); it reads SAPSSSAGSS…GSASATSPPL (71 aa).

The protein belongs to the cell wall mannoprotein 1 family. In terms of processing, galactomannoprotein, glycosylated.

Its subcellular location is the secreted. It localises to the cell wall. In terms of biological role, constitutive protein of the cell wall. Antigen target of host humoral immune response. This is Cell wall mannoprotein 1 from Aspergillus flavus.